The sequence spans 266 residues: Pyrrolizixenacetamide deacetylase (266 aa).

T28 is an acetate binding site. S94 acts as the Nucleophile in catalysis. L95 is a binding site for acetate. Residues D215 and H242 each act as charge relay system in the active site. Residue H242 coordinates acetate.

It belongs to the AB hydrolase superfamily. Homodimer.

It catalyses the reaction pyrrolizixenacetamide + H2O = 3-amino-5,6,7,7a-tetrahydro-1H-pyrrolizin-1-one + acetate + H(+). Its function is as follows. Involved in the biosynthetic pathway of pyrrolizwilline, a pyrrolizidine alkaloid. Catalyzes the N-deacetylation of pyrrolizixenacetamide. The chain is Pyrrolizixenacetamide deacetylase from Xenorhabdus hominickii.